The sequence spans 402 residues: Multidrug resistance protein MdtG (402 aa).

11 helical membrane passes run leucine 14–phenylalanine 34, leucine 52–tryptophan 72, leucine 90–isoleucine 110, alanine 113–valine 133, alanine 149–leucine 169, proline 171–valine 191, valine 219–isoleucine 239, leucine 254–proline 274, valine 288–asparagine 308, leucine 318–isoleucine 338, and alanine 376–phenylalanine 396.

Belongs to the major facilitator superfamily. DHA1 family. MdtG (TC 2.A.1.2.20) subfamily.

It is found in the cell inner membrane. This is Multidrug resistance protein MdtG from Proteus mirabilis (strain HI4320).